Here is a 281-residue protein sequence, read N- to C-terminus: E3 ubiquitin-protein ligase MARCHF5 (281 aa).

The RING-CH-type zinc-finger motif lies at Leu-9–Val-78. The Zn(2+) site is built by Cys-17, Cys-20, Cys-36, Cys-38, His-46, Cys-49, Cys-68, and Cys-71. 4 consecutive transmembrane segments (helical) span residues Phe-102–Val-122, Pro-142–Ile-162, Ile-212–Ser-232, and Thr-241–Gln-261.

The protein localises to the mitochondrion outer membrane. It is found in the endoplasmic reticulum membrane. The enzyme catalyses S-ubiquitinyl-[E2 ubiquitin-conjugating enzyme]-L-cysteine + [acceptor protein]-L-lysine = [E2 ubiquitin-conjugating enzyme]-L-cysteine + N(6)-ubiquitinyl-[acceptor protein]-L-lysine.. Its pathway is protein modification; protein ubiquitination. Functionally, mitochondrial E3 ubiquitin-protein ligase that plays a crucial role in the control of mitochondrial morphology by acting as a positive regulator of mitochondrial fission. May play a role in the prevention of cell senescence acting as a regulator of mitochondrial quality control. This Gallus gallus (Chicken) protein is E3 ubiquitin-protein ligase MARCHF5 (MARCHF5).